Reading from the N-terminus, the 669-residue chain is DNA ligase (669 aa).

NAD(+) contacts are provided by residues 33 to 37 (DLTYD), 82 to 83 (SL), and E115. The active-site N6-AMP-lysine intermediate is the K117. Residues R138, E172, K286, and K310 each contribute to the NAD(+) site. Zn(2+) is bound by residues C401, C404, C417, and C422.

The protein belongs to the NAD-dependent DNA ligase family. LigA subfamily. Mg(2+) serves as cofactor. Requires Mn(2+) as cofactor.

The catalysed reaction is NAD(+) + (deoxyribonucleotide)n-3'-hydroxyl + 5'-phospho-(deoxyribonucleotide)m = (deoxyribonucleotide)n+m + AMP + beta-nicotinamide D-nucleotide.. Functionally, DNA ligase that catalyzes the formation of phosphodiester linkages between 5'-phosphoryl and 3'-hydroxyl groups in double-stranded DNA using NAD as a coenzyme and as the energy source for the reaction. It is essential for DNA replication and repair of damaged DNA. The sequence is that of DNA ligase from Borrelia hermsii (strain HS1 / DAH).